We begin with the raw amino-acid sequence, 98 residues long: NADH-ubiquinone oxidoreductase chain 4L (98 aa).

3 consecutive transmembrane segments (helical) span residues 2-22 (PPIFANIILAFATAFLGTLIF), 29-49 (SLLCLEGMMLSMFILSTLIIL), and 61-81 (ILLLVFAACEAAIGLALLVMV).

The protein belongs to the complex I subunit 4L family. As to quaternary structure, core subunit of respiratory chain NADH dehydrogenase (Complex I) which is composed of 45 different subunits.

It is found in the mitochondrion inner membrane. It carries out the reaction a ubiquinone + NADH + 5 H(+)(in) = a ubiquinol + NAD(+) + 4 H(+)(out). In terms of biological role, core subunit of the mitochondrial membrane respiratory chain NADH dehydrogenase (Complex I) which catalyzes electron transfer from NADH through the respiratory chain, using ubiquinone as an electron acceptor. Part of the enzyme membrane arm which is embedded in the lipid bilayer and involved in proton translocation. The protein is NADH-ubiquinone oxidoreductase chain 4L (MT-ND4L) of Avahi unicolor (Sambirano woolly lemur).